The chain runs to 298 residues: Tryptophan 2,3-dioxygenase (298 aa).

Substrate-binding positions include 51–55, Tyr113, and Arg117; that span reads FIIQH. Position 240 (His240) interacts with heme. Thr254 contributes to the substrate binding site.

Belongs to the tryptophan 2,3-dioxygenase family. As to quaternary structure, homotetramer. It depends on heme as a cofactor.

The enzyme catalyses L-tryptophan + O2 = N-formyl-L-kynurenine. It participates in amino-acid degradation; L-tryptophan degradation via kynurenine pathway; L-kynurenine from L-tryptophan: step 1/2. In terms of biological role, heme-dependent dioxygenase that catalyzes the oxidative cleavage of the L-tryptophan (L-Trp) pyrrole ring and converts L-tryptophan to N-formyl-L-kynurenine. Catalyzes the oxidative cleavage of the indole moiety. The polypeptide is Tryptophan 2,3-dioxygenase (Xanthomonas campestris pv. campestris (strain 8004)).